We begin with the raw amino-acid sequence, 546 residues long: Chaperonin GroEL 1 (546 aa).

Residues 29–32, 86–90, Gly414, and Asp499 contribute to the ATP site; these read TLGP and DGTTT.

The protein belongs to the chaperonin (HSP60) family. In terms of assembly, forms a cylinder of 14 subunits composed of two heptameric rings stacked back-to-back. Interacts with the co-chaperonin GroES.

The protein resides in the cytoplasm. It carries out the reaction ATP + H2O + a folded polypeptide = ADP + phosphate + an unfolded polypeptide.. In terms of biological role, together with its co-chaperonin GroES, plays an essential role in assisting protein folding. The GroEL-GroES system forms a nano-cage that allows encapsulation of the non-native substrate proteins and provides a physical environment optimized to promote and accelerate protein folding. The sequence is that of Chaperonin GroEL 1 from Roseiflexus sp. (strain RS-1).